The chain runs to 300 residues: NAD kinase (300 aa).

D75 serves as the catalytic Proton acceptor. NAD(+) contacts are provided by residues 75–76 (DG), 149–150 (ND), R177, D179, 190–195 (TAYALS), A214, and Q248.

Belongs to the NAD kinase family. It depends on a divalent metal cation as a cofactor.

It localises to the cytoplasm. The catalysed reaction is NAD(+) + ATP = ADP + NADP(+) + H(+). In terms of biological role, involved in the regulation of the intracellular balance of NAD and NADP, and is a key enzyme in the biosynthesis of NADP. Catalyzes specifically the phosphorylation on 2'-hydroxyl of the adenosine moiety of NAD to yield NADP. In Burkholderia cenocepacia (strain HI2424), this protein is NAD kinase.